The sequence spans 566 residues: E3 ubiquitin-protein ligase Rnf220 (566 aa).

Residue Lys277 forms a Glycyl lysine isopeptide (Lys-Gly) (interchain with G-Cter in SUMO2) linkage. Positions 277–300 are disordered; that stretch reads KREGDSPTASPHSSATEDLHHSDR. Residues 291–300 show a composition bias toward basic and acidic residues; the sequence is ATEDLHHSDR. A Phosphoserine modification is found at Ser390. Residues 485-513 are a coiled coil; it reads EESAVTTFEALKARVRELERQLSRGDRYK. The interval 514-522 is required for targeting to the cytoplasm; it reads CLICMDSYS. The RING-type zinc-finger motif lies at 514–553; it reads CLICMDSYSMPLTSIQCWHVHCEECWLRTLGAKKLCPQCN.

As to quaternary structure, interacts with SIN3B. Interacts with CTNNB1 (via Armadillo repeats 2-8). Interacts with USP7 (via MATH domain). Post-translationally, auto-ubiquitinated; leads to proteasomal degradation. In terms of tissue distribution, in the brain, expressed in the hippocampus, telenecephalon and cerebellum. No expression in astro glial cells or in neural progenitor cells.

It localises to the cytoplasm. The protein resides in the nucleus. It carries out the reaction S-ubiquitinyl-[E2 ubiquitin-conjugating enzyme]-L-cysteine + [acceptor protein]-L-lysine = [E2 ubiquitin-conjugating enzyme]-L-cysteine + N(6)-ubiquitinyl-[acceptor protein]-L-lysine.. The protein operates within protein modification; protein ubiquitination. Its function is as follows. E3 ubiquitin-protein ligase that promotes the ubiquitination and proteasomal degradation of SIN3B. Independently of its E3 ligase activity, acts as a CTNNB1 stabilizer through USP7-mediated deubiquitination of CTNNB1 and promotes Wnt signaling. Plays a critical role in the regulation of nuclear lamina. This chain is E3 ubiquitin-protein ligase Rnf220 (Rnf220), found in Mus musculus (Mouse).